We begin with the raw amino-acid sequence, 258 residues long: MLRAAWRALSSVRAQAVTRAPVPALRGGSSASLLSARCGLQPPSLLRAARAYAAVQKPVQPKQDDEPPSSAFIKEYKDIIPNIEKVDDVVKRILSLEMASRKEKLKIKQEQLMNKIVENPEDSRTLEAQIIALTVRIRNYEEHMQKHRKDKAHKRHLLMSIDRRKKLLKILRQTNYDVFEKTCKELGVEYTLPPLHFQKVHRRFLAKKALCIRVYQEVQKLKKQKRALKAAAAAAKKEKNEGVPENPSNAVPEKTQVN.

A mitochondrion-targeting transit peptide spans 1 to 57; the sequence is MLRAAWRALSSVRAQAVTRAPVPALRGGSSASLLSARCGLQPPSLLRAARAYAAVQK. The disordered stretch occupies residues 229-258; it reads KAAAAAAKKEKNEGVPENPSNAVPEKTQVN.

It belongs to the universal ribosomal protein uS15 family. As to quaternary structure, component of the mitochondrial ribosome small subunit (28S) which comprises a 12S rRNA and about 30 distinct proteins. Interacts with METTL17.

It is found in the mitochondrion matrix. The protein is Small ribosomal subunit protein uS15m (Mrps15) of Mus musculus (Mouse).